A 1101-amino-acid chain; its full sequence is Serine/threonine-protein kinase PSK2 (1101 aa).

At Thr118 the chain carries Phosphothreonine. In terms of domain architecture, Protein kinase spans Phe841 to Leu1099. Residues Met847–Val855 and Lys870 each bind ATP. Asp975 serves as the catalytic Proton acceptor.

Belongs to the protein kinase superfamily. Ser/Thr protein kinase family.

Its subcellular location is the cytoplasm. The enzyme catalyses L-seryl-[protein] + ATP = O-phospho-L-seryl-[protein] + ADP + H(+). The catalysed reaction is L-threonyl-[protein] + ATP = O-phospho-L-threonyl-[protein] + ADP + H(+). Its function is as follows. Serine/threonine-protein kinase involved in the control of sugar metabolism and translation. Phosphorylates UGP1, which is required for normal glycogen and beta-(1,6)-glucan synthesis. This phosphorylation shifts glucose partitioning toward cell wall glucan synthesis at the expense of glycogen synthesis. Also phosphorylates the glycogen synthase GSY2 and the translation factors CAF20, TIF11 and SRO9. This Saccharomyces cerevisiae (strain ATCC 204508 / S288c) (Baker's yeast) protein is Serine/threonine-protein kinase PSK2 (PSK2).